We begin with the raw amino-acid sequence, 733 residues long: Fibronectin type III domain-containing protein 7 (733 aa).

The N-terminal stretch at 1–25 (MAGGRETCLPLIGFILICLKMVASA) is a signal peptide. 8 consecutive Fibronectin type-III domains span residues 28–115 (APEI…TVLA), 116–202 (APIL…TSPR), 203–288 (APAN…TVAC), 289–373 (APGR…TAPC), 374–459 (CPSD…TAPC), 460–544 (SPEI…TVPC), 545–632 (CPTG…CCPL), and 631–715 (PLGV…YSVT). N-linked (GlcNAc...) asparagine glycosylation occurs at Asn-230. N-linked (GlcNAc...) asparagine glycosylation is present at Asn-433.

The protein resides in the secreted. The polypeptide is Fibronectin type III domain-containing protein 7 (FNDC7) (Homo sapiens (Human)).